Here is a 211-residue protein sequence, read N- to C-terminus: tRNA (guanine-N(7)-)-methyltransferase (211 aa).

Residues Glu44, Asp69, Asp96, and Asp118 each coordinate S-adenosyl-L-methionine. Asp118 is an active-site residue. Residue Lys122 participates in substrate binding. The tract at residues 124 to 129 (RHEKRR) is interaction with RNA. Residues Asp154 and 191-194 (TEYE) each bind substrate.

The protein belongs to the class I-like SAM-binding methyltransferase superfamily. TrmB family.

The catalysed reaction is guanosine(46) in tRNA + S-adenosyl-L-methionine = N(7)-methylguanosine(46) in tRNA + S-adenosyl-L-homocysteine. It functions in the pathway tRNA modification; N(7)-methylguanine-tRNA biosynthesis. Its function is as follows. Catalyzes the formation of N(7)-methylguanine at position 46 (m7G46) in tRNA. The polypeptide is tRNA (guanine-N(7)-)-methyltransferase (Streptococcus pneumoniae (strain JJA)).